The following is a 610-amino-acid chain: UvrABC system protein C (610 aa).

One can recognise a GIY-YIG domain in the interval 16-94 (SQPGVYRMYD…IKLYQPRYNV (79 aa)). Positions 204-239 (DQVLTQLIARMEKASQDLAFEEAARIRDQIQAVRRV) constitute a UVR domain.

This sequence belongs to the UvrC family. In terms of assembly, interacts with UvrB in an incision complex.

It localises to the cytoplasm. Its function is as follows. The UvrABC repair system catalyzes the recognition and processing of DNA lesions. UvrC both incises the 5' and 3' sides of the lesion. The N-terminal half is responsible for the 3' incision and the C-terminal half is responsible for the 5' incision. The protein is UvrABC system protein C of Salmonella enteritidis PT4 (strain P125109).